The following is a 612-amino-acid chain: Dihydroxy-acid dehydratase (612 aa).

D81 contributes to the Mg(2+) binding site. C122 lines the [2Fe-2S] cluster pocket. D123 and K124 together coordinate Mg(2+). K124 is modified (N6-carboxylysine). C195 is a [2Fe-2S] cluster binding site. Residue E491 coordinates Mg(2+). The active-site Proton acceptor is the S517.

It belongs to the IlvD/Edd family. In terms of assembly, homodimer. The cofactor is [2Fe-2S] cluster. Requires Mg(2+) as cofactor.

The enzyme catalyses (2R)-2,3-dihydroxy-3-methylbutanoate = 3-methyl-2-oxobutanoate + H2O. The catalysed reaction is (2R,3R)-2,3-dihydroxy-3-methylpentanoate = (S)-3-methyl-2-oxopentanoate + H2O. It participates in amino-acid biosynthesis; L-isoleucine biosynthesis; L-isoleucine from 2-oxobutanoate: step 3/4. Its pathway is amino-acid biosynthesis; L-valine biosynthesis; L-valine from pyruvate: step 3/4. Its function is as follows. Functions in the biosynthesis of branched-chain amino acids. Catalyzes the dehydration of (2R,3R)-2,3-dihydroxy-3-methylpentanoate (2,3-dihydroxy-3-methylvalerate) into 2-oxo-3-methylpentanoate (2-oxo-3-methylvalerate) and of (2R)-2,3-dihydroxy-3-methylbutanoate (2,3-dihydroxyisovalerate) into 2-oxo-3-methylbutanoate (2-oxoisovalerate), the penultimate precursor to L-isoleucine and L-valine, respectively. The protein is Dihydroxy-acid dehydratase of Rhizobium rhizogenes (strain K84 / ATCC BAA-868) (Agrobacterium radiobacter).